We begin with the raw amino-acid sequence, 911 residues long: DNA polymerase I (911 aa).

Residues 186 to 280 (VTPAQYPDLA…DTLRLQPWDR (95 aa)) form the 5'-3' exonuclease domain. The 178-residue stretch at 320–497 (RGGLLESGTV…LAAALDAELD (178 aa)) folds into the 3'-5' exonuclease domain.

It belongs to the DNA polymerase type-A family. Single-chain monomer with multiple functions.

The catalysed reaction is DNA(n) + a 2'-deoxyribonucleoside 5'-triphosphate = DNA(n+1) + diphosphate. In terms of biological role, in addition to polymerase activity, this DNA polymerase exhibits 3'-5' and 5'-3' exonuclease activity. The protein is DNA polymerase I (polA) of Mycobacterium leprae (strain TN).